Consider the following 153-residue polypeptide: MNKETKLQVEAIKNGTVIDHIPAQVGIKVLKLFDMHNSSQRVTIGLNLPSSALGNKDLLKIENVFINEEQASKLALYAPHATVNQIEDYQVVKKLALELPEFVSDVFECPNSNCITHNEPVASNFRVFEKKGDVRLKCKYCEKVFSREIVTER.

Positions 109, 114, 138, and 141 each coordinate Zn(2+).

It belongs to the PyrI family. In terms of assembly, contains catalytic and regulatory chains. It depends on Zn(2+) as a cofactor.

Functionally, involved in allosteric regulation of aspartate carbamoyltransferase. This chain is Aspartate carbamoyltransferase regulatory chain, found in Vibrio vulnificus (strain YJ016).